The sequence spans 340 residues: MSKPIILTGDRPTGKLHLGHYVGSLKNRVLLQNENKYEMFVFLADQQALTDHAKESEIIKDSIANVALDYLSVGLDPEKVTIFIQSQIPELAELTMYYMNLVSLARLERNPTVKTEIAQKGFGESIPTGFLVYPISQAADITAFKANYVPVGNDQKPMIEQTREIVRSFNHTYKTNCLVEPEGIYPKNEAAGRLPGLDGNAKMSKSLGNGIFLSDDADTVRKKVMSMYTDPNHIRVEDPGQIEGNMVFHYLDIFGRKEDQTDIAAMKEHYQSGGLGDVKTKHYLLDILERELTPIRRRRLEYEKNMDQVLDILKKGSETARETASETLSGVKRAMGINYF.

Residues 11–13 and 19–20 each bind ATP; these read RPT and GH. A 'HIGH' region motif is present at residues 12–20; that stretch reads PTGKLHLGH. Asp140 is an L-tryptophan binding site. ATP-binding positions include 152 to 154, Leu194, and 202 to 206; these read GND and KMSKS. A 'KMSKS' region motif is present at residues 202–206; that stretch reads KMSKS.

It belongs to the class-I aminoacyl-tRNA synthetase family. As to quaternary structure, homodimer.

The protein resides in the cytoplasm. It carries out the reaction tRNA(Trp) + L-tryptophan + ATP = L-tryptophyl-tRNA(Trp) + AMP + diphosphate + H(+). Functionally, catalyzes the attachment of tryptophan to tRNA(Trp). This is Tryptophan--tRNA ligase from Streptococcus mutans serotype c (strain ATCC 700610 / UA159).